The following is a 378-amino-acid chain: Alanine racemase (378 aa).

Lys40 acts as the Proton acceptor; specific for D-alanine in catalysis. Lys40 bears the N6-(pyridoxal phosphate)lysine mark. Residue Arg140 coordinates substrate. The active-site Proton acceptor; specific for L-alanine is Tyr270. Residue Met317 coordinates substrate.

It belongs to the alanine racemase family. Requires pyridoxal 5'-phosphate as cofactor.

It catalyses the reaction L-alanine = D-alanine. It participates in amino-acid biosynthesis; D-alanine biosynthesis; D-alanine from L-alanine: step 1/1. In terms of biological role, catalyzes the interconversion of L-alanine and D-alanine. May also act on other amino acids. The protein is Alanine racemase (alr) of Lacticaseibacillus paracasei (strain ATCC 334 / BCRC 17002 / CCUG 31169 / CIP 107868 / KCTC 3260 / NRRL B-441) (Lactobacillus paracasei).